The chain runs to 59 residues: Potassium channel toxin alpha-KTx 1.1 (59 aa).

A signal peptide spans 1-22 (MKILSVLLLALIICSIVGWSEA). Gln23 is modified (pyrrolidone carboxylic acid). Cystine bridges form between Cys29–Cys50, Cys35–Cys55, and Cys39–Cys57. Positions 48–55 (GKCMNKKC) are interaction with Ca(2+)-activated K(+) channels.

The protein belongs to the short scorpion toxin superfamily. Potassium channel inhibitor family. Alpha-KTx 01 subfamily. Expressed by the venom gland.

Its subcellular location is the secreted. In terms of biological role, this toxin inhibits numerous potassium channels: shaker (Ki=227 nM), Kv1.2/KCNA2 (nanomolar range), Kv1.3/KCNA3 (nanomolar range), Kv1.5/KCNA5 (Kd&gt;100 nM), Kv1.6/KCNA6 (Ki=22 nM), KCa1.1/KCNMA1 (IC(50)=5.9 nM). It blocks channel activity by a simple bimolecular inhibition process. It also shows a weak interaction with nicotinic acetylcholine receptors (nAChR), suggesting it may weakly inhibit it. It also exhibits pH-specific antimicrobial activities against bacteria (B.subtilis, E.coli and S.aureus) and the fungus C.albicans. The sequence is that of Potassium channel toxin alpha-KTx 1.1 from Leiurus hebraeus (Hebrew deathstalker scorpion).